A 100-amino-acid chain; its full sequence is Large ribosomal subunit protein uL23 (100 aa).

It belongs to the universal ribosomal protein uL23 family. As to quaternary structure, part of the 50S ribosomal subunit. Contacts protein L29, and trigger factor when it is bound to the ribosome.

Functionally, one of the early assembly proteins it binds 23S rRNA. One of the proteins that surrounds the polypeptide exit tunnel on the outside of the ribosome. Forms the main docking site for trigger factor binding to the ribosome. The sequence is that of Large ribosomal subunit protein uL23 from Synechococcus elongatus (strain ATCC 33912 / PCC 7942 / FACHB-805) (Anacystis nidulans R2).